The sequence spans 722 residues: Transcription factor kayak, isoforms D/sro (722 aa).

Positions 173–188 (QHQTQQQHQSQQQQQH) are enriched in low complexity. Disordered regions lie at residues 173–193 (QHQTQQQHQSQQQQQHQRQDY), 283–317 (LGQGSESEDSNASYNDTQMNEEQDTTDTSSAHTDS), and 350–407 (GSAS…KRRV). The segment covering 283 to 300 (LGQGSESEDSNASYNDTQ) has biased composition (polar residues). Low complexity-rich tracts occupy residues 308–317 (TDTSSAHTDS) and 350–364 (GSASVGSSNANTSNT). Residues 385 to 448 (EQKRAVRRER…NQLEYLLATH (64 aa)) enclose the bZIP domain. The segment at 387-406 (KRAVRRERNKQAAARCRKRR) is basic motif. The leucine-zipper stretch occupies residues 413-420 (LTEEVEQL). Low complexity predominate over residues 477 to 498 (AGSSGSGASSHHNHNSNDSSNG). 2 disordered regions span residues 477–519 (AGSS…PLDL) and 683–722 (DGGTGLTPVSGPLVPNSSSTNKHPLELPTPTAEPSKLVSL). The segment covering 506–516 (TLNSTGRSNSP) has biased composition (polar residues). S515 carries the post-translational modification Phosphoserine.

The protein belongs to the bZIP family. Fos subfamily. In terms of assembly, homodimer. Heterodimer with Jra. The kay-Jra heterodimer binds more stably to the AP-1 site than either of the two proteins alone.

Its subcellular location is the nucleus. In terms of biological role, developmentally regulated transcription factor AP-1 binds and recognizes the enhancer DNA sequence: 5'-TGA[CG]TCA-3'. May play a role in the function or determination of a particular subset of cells in the developing embryo. It is able to carry out its function either independently of or in conjunction with Jra. The polypeptide is Transcription factor kayak, isoforms D/sro (Drosophila melanogaster (Fruit fly)).